The primary structure comprises 990 residues: Protein argonaute 7 (990 aa).

Residues 1–13 (MEEKTHHHHHSTN) are compositionally biased toward basic residues. The interval 1–25 (MEEKTHHHHHSTNKHIPSSKSRTPL) is disordered. The PAZ domain maps to 379–484 (EFLTDLPRNK…LPMELCMICE (106 aa)). The Piwi domain maps to 649-950 (LIICVMEKKH…AAYRGRLYIE (302 aa)). The segment at 953-973 (SESNGGSMNPSSVSRVGPPKT) is disordered. The segment covering 954 to 966 (ESNGGSMNPSSVS) has biased composition (polar residues).

It belongs to the argonaute family. Ago subfamily. Expressed in leaves and floral buds, and at low levels in roots.

Functionally, involved in RNA-mediated post-transcriptional gene silencing (PTGS). Main component of the RNA-induced silencing complex (RISC) that binds to a short guide RNA such as a microRNA (miRNA) or small interfering RNA (siRNA). RISC uses the mature miRNA or siRNA as a guide for slicer-directed cleavage of homologous mRNAs to repress gene expression. Required for the processing of 21 nucleotide trans-acting siRNAs (ta-siRNAs) derived from TAS3a transcripts. Associates preferentially with the microRNA (miRNA) miR390 which guides the cleavage of TAS3 precursor RNA. Seems to act as miR390 specific slicer. Associates mainly with small RNAs of 21 nucleotide in length and with a 5' terminal adenosine. Acts in the RDR6/SGS3/DCL4/AGO7 trans-acting siRNA pathway involved in leaf developmental timing. Does not seem to act on leaf polarity. Required for the production of the 30-40nt bacterial-induced long siRNAs (lsiRNA). Involved in antiviral RNA silencing by contributing to efficient viral RNAs clearance. Targets less structured viral RNAs than AGO1 which is capable of targeting RNAs with more compact structures. The chain is Protein argonaute 7 (AGO7) from Arabidopsis thaliana (Mouse-ear cress).